The primary structure comprises 513 residues: MFTIRPDEISSVIRDQIQKYNTELQVTNVGTVLQVGDGIARVYGLEKCMASELLEFEDGTIGIALNLEEDNVGAVLMGAGRTIEEGSTVRATGRIASIPVGPAFLGRVVNALAIPIDGKGDIVGSETRLLESPAPGIIKRKSVYEPLATGITAIDAMIPIGRGQRELIIGDRQTGKTTIAIDTILNQKGKGVVCVYVAIGQKASTVAQIVEVLRSRGALEYTIIVAANANEPAALQYLAPYTGCTLGEYVMYNGLTLPGSDKKINAALLVYDDLSKQAVAYRQMSLLLRRPPGREAYPGDVFYLHSRLLERAAKLSPDLGEGSLTALPIIETQAGDVSAYIPTNVISITDGQIFLDSGLFNSGLRPAIDAGISVSRVGGAAQTKAMKKVAGKLRLDLAQFSELEAFSQFASDLDKATQAQLARGLRLREILKQPQYSPLSVAQQVAIIYAATNGYLDDIDVKGIQPFKQQFLNYLDSSVSEYGQEIETTKALTDKAVDLLKKALNDFKTTVKK.

170–177 is an ATP binding site; that stretch reads GDRQTGKT.

The protein belongs to the ATPase alpha/beta chains family. As to quaternary structure, F-type ATPases have 2 components, CF(1) - the catalytic core - and CF(0) - the membrane proton channel. CF(1) has five subunits: alpha(3), beta(3), gamma(1), delta(1), epsilon(1). CF(0) has four main subunits: a(1), b(1), b'(1) and c(9-12).

It is found in the cell inner membrane. It catalyses the reaction ATP + H2O + 4 H(+)(in) = ADP + phosphate + 5 H(+)(out). Produces ATP from ADP in the presence of a proton gradient across the membrane. The alpha chain is a regulatory subunit. This chain is ATP synthase subunit alpha, found in Gloeobacter violaceus (strain ATCC 29082 / PCC 7421).